The primary structure comprises 655 residues: MQRGKISFGKIKLNVNVPPAEPRSNETEAEDAKESTEASGNGGGFKKMDKEQMIRQIEDVAEDLESQHLKEVMGISGFGRKAAKVFDINEQIEKARVTRPGMDKKREESKPKEDDQKDEEEEDVIGPLPPAVTTDKEKATKESSKDEDSDDDDYSSDEDSDDEQSLAKRIPYTHEVQMQHGSRAVLALAGDPSGARLVSGSIDYDMCFWDFAGMDSSMRSFRQLQPCENHPIRSLQYSVTGDMILVISGNAQAKVLDRDGFEKLECCKGDQYISDMSRTKGHVAQLTSGCWHPFNREQFLTAALDGTLRIWQGLKSKEQLQVIKTRAQGGLRTNAASCNFNRDATLIAAGCVDGSIQTWDTRKMFVNTTHCVRDAHQKGSEITSIVFSYMGQQLATRSNDETMKLWDLRQFKQPLHTWTNLFSRYDTTDCCFSPDDRLLVTGESLPKGQAEANLYFYSTKSYEEVQRIPVSNAHVVKTLWHPKLNQLFVSCGNGTIKCYYDEHRSIRGAKLCVVKTHRKRQPMEMVGVSQIITPHALPLFRQEKSRTSRKRMEKARMDPVKSQRPDLPITSGQGGRVASSGGTLSSYVIRNLGLSKRVDDDQDPREAILKYAKDAAENPYWIAPAYKQTQPKAIFSEKLPADEPATKKPKTEADK.

2 disordered regions span residues 1–54 (MQRG…EQMI) and 83–165 (AKVF…DEQS). Basic and acidic residues-rich tracts occupy residues 23–36 (RSNETEAEDAKEST), 91–115 (QIEKARVTRPGMDKKREESKPKEDD), and 134–146 (TDKEKATKESSKD). Residues 147 to 164 (EDSDDDDYSSDEDSDDEQ) are compositionally biased toward acidic residues. WD repeat units lie at residues 180–219 (HGSRAVLALAGDPSGARLVSGSIDYDMCFWDFAGMDSSMR), 227–268 (CENH…ECCK), 281–321 (GHVA…EQLQ), 330–369 (GLRTNAASCNFNRDATLIAAGCVDGSIQTWDTRKMFVNTT), 377–416 (QKGSEITSIVFSYMGQQLATRSNDETMKLWDLRQFKQPLH), 422–467 (FSRY…EVQR), and 470–510 (VSNA…RGAK). 2 disordered regions span residues 544–580 (KSRTSRKRMEKARMDPVKSQRPDLPITSGQGGRVASS) and 633–655 (AIFSEKLPADEPATKKPKTEADK). Basic and acidic residues-rich tracts occupy residues 554–564 (KARMDPVKSQR) and 639–655 (LPADEPATKKPKTEADK).

Belongs to the WD repeat GAD-1 family.

The polypeptide is Gastrulation defective protein 1 homolog (Drosophila melanogaster (Fruit fly)).